The primary structure comprises 85 residues: Large ribosomal subunit protein bL27 (85 aa).

The segment at M1–L21 is disordered.

This sequence belongs to the bacterial ribosomal protein bL27 family.

This Erwinia tasmaniensis (strain DSM 17950 / CFBP 7177 / CIP 109463 / NCPPB 4357 / Et1/99) protein is Large ribosomal subunit protein bL27.